The primary structure comprises 536 residues: MNKIVHKVAEAFRKNGVPRTKWLNPKTIYGLANQKLLGSVEAPHAQGTGLNTVPQVEHYTKACRTKQRDMVRSYLEATGSTHFARLNTPAYNKSSALEFYAKLKALQRYTEGEEVLFQMSSVEVREIISRLVKLTQEGDQIPDEQRRFPTELFMDVAPVPNFNDDPGILEQYIGILTHSAFYYHNTSKIDPIPHILRDLLHPQNEKTASLRTTTMFNDLIYYFGKKSDYASCREYYSQMKLEKKTPNIETYRLLFLNLLKNMQIPKKQLPYKEMIFYLNDMEKFGVPADAKIWAYCYHLLVESVSKKLLLEKMIQHNAPISPDFIVSILRTLDVDCKAILEFAKEYSIPFTPKLLRLCISKLCKEYKFESAWQLLTSLCRSTDVVTTGSVNILLNAAAEKGRLDLAVLTYNSMKVQLGVTPDLRTHRLIFKAMARNGYHENFQDVYHWAVWSMKRSTSGWFVHDAWSRRCESMIKQKCGSVTPPTTENMEKVAAILHRGVWDNRGLFIRCWGEYKELRHVFRLLGSIPPAYKGKTA.

PPR repeat units follow at residues 212–246 (TTTM…KKTP) and 386–421 (TTGS…GVTP).

It localises to the mitochondrion inner membrane. In terms of biological role, required for respiration. This is ATPase expression protein 3 (AEP3) from Eremothecium gossypii (strain ATCC 10895 / CBS 109.51 / FGSC 9923 / NRRL Y-1056) (Yeast).